Reading from the N-terminus, the 360-residue chain is MTAKTPLHTTHLACGAKMVDFHGWDMPLHYGSQLNEHHAVRNDAGMFDVSHMTIVDILGAGGRQFLRKLLTNDVDQITHNGKALYSCMCNEHGGIIDDLIVYQRASDNYRVVLNSATRQNDVAWIRAKSEGFAVGLQERRELSMLAVQGPNAIAKTLSILAPAHVDAVSTLTSFECVDVDHWFFARTGYTGEDGLEIIVPNEFVTQLWNDLLNAGVTPCGLGARDTLRLEAGMLLYGQDMDETTTPLESGLAWTVKWEPEDRGFIGMGALASQKQQGIKRKMVGLTLLDKGIMRHGQKVIIEGCPDGIITSGSYSPTLQQSIALARVPVETGEQVLVDIRGKLIPAKVGKPRFIKQGKPV.

It belongs to the GcvT family. The glycine cleavage system is composed of four proteins: P, T, L and H.

The catalysed reaction is N(6)-[(R)-S(8)-aminomethyldihydrolipoyl]-L-lysyl-[protein] + (6S)-5,6,7,8-tetrahydrofolate = N(6)-[(R)-dihydrolipoyl]-L-lysyl-[protein] + (6R)-5,10-methylene-5,6,7,8-tetrahydrofolate + NH4(+). The glycine cleavage system catalyzes the degradation of glycine. The sequence is that of Aminomethyltransferase from Legionella pneumophila (strain Paris).